Reading from the N-terminus, the 284-residue chain is Elongation factor Ts (284 aa).

The segment at 80 to 83 (TDFV) is involved in Mg(2+) ion dislocation from EF-Tu.

Belongs to the EF-Ts family.

The protein localises to the cytoplasm. Its function is as follows. Associates with the EF-Tu.GDP complex and induces the exchange of GDP to GTP. It remains bound to the aminoacyl-tRNA.EF-Tu.GTP complex up to the GTP hydrolysis stage on the ribosome. In Photobacterium profundum (strain SS9), this protein is Elongation factor Ts.